The primary structure comprises 322 residues: MDTSSINAQSIFDDNAATLKLSWLTGHEGWERGFSADTVANATSSADLVGHLNLIHPNRIQVLGEAEIDYYQRQTDEDRSRHMAELIALEPPFLVVAGGAAAPPELVLRCTRSSTPLFTTPMSAAAVIDSLRLYMSRILAPRATLHGVFLDILGMGVLLTGDSGLGKSELGLELISRGHGLVADDAVDFVRLGPDFVEGRCPPLLQNLLEVRGLGLLDIKTIFGETAVRRKMKLKLIVQLVRRPDGEFQRLPLESQTVDVLGLPISKVTIQVAAGRNLAVLVEAAVRNTILQLRGIDTLRDFMDRQRLAMQDPESQFPGKLV.

Catalysis depends on residues His146 and Lys167. Gly161–Ser168 is an ATP binding site. A Mg(2+)-binding site is contributed by Ser168. Catalysis depends on Asp185, which acts as the Proton acceptor; for phosphorylation activity. Proton donor; for dephosphorylation activity. The tract at residues Leu209–Asp218 is important for the catalytic mechanism of both phosphorylation and dephosphorylation. Glu210 lines the Mg(2+) pocket. The active site involves Arg250. The tract at residues Gln271–Arg276 is important for the catalytic mechanism of dephosphorylation.

The protein belongs to the HPrK/P family. Homohexamer. The cofactor is Mg(2+).

It catalyses the reaction [HPr protein]-L-serine + ATP = [HPr protein]-O-phospho-L-serine + ADP + H(+). The enzyme catalyses [HPr protein]-O-phospho-L-serine + phosphate + H(+) = [HPr protein]-L-serine + diphosphate. Catalyzes the ATP- as well as the pyrophosphate-dependent phosphorylation of a specific serine residue in HPr, a phosphocarrier protein of the phosphoenolpyruvate-dependent sugar phosphotransferase system (PTS). HprK/P also catalyzes the pyrophosphate-producing, inorganic phosphate-dependent dephosphorylation (phosphorolysis) of seryl-phosphorylated HPr (P-Ser-HPr). The chain is HPr kinase/phosphorylase from Burkholderia multivorans (strain ATCC 17616 / 249).